Consider the following 149-residue polypeptide: D-aminoacyl-tRNA deacylase (149 aa).

A Gly-cisPro motif, important for rejection of L-amino acids motif is present at residues 137–138 (GP).

This sequence belongs to the DTD family. Homodimer.

Its subcellular location is the cytoplasm. It catalyses the reaction glycyl-tRNA(Ala) + H2O = tRNA(Ala) + glycine + H(+). The enzyme catalyses a D-aminoacyl-tRNA + H2O = a tRNA + a D-alpha-amino acid + H(+). An aminoacyl-tRNA editing enzyme that deacylates mischarged D-aminoacyl-tRNAs. Also deacylates mischarged glycyl-tRNA(Ala), protecting cells against glycine mischarging by AlaRS. Acts via tRNA-based rather than protein-based catalysis; rejects L-amino acids rather than detecting D-amino acids in the active site. By recycling D-aminoacyl-tRNA to D-amino acids and free tRNA molecules, this enzyme counteracts the toxicity associated with the formation of D-aminoacyl-tRNA entities in vivo and helps enforce protein L-homochirality. In Anaeromyxobacter dehalogenans (strain 2CP-C), this protein is D-aminoacyl-tRNA deacylase.